A 292-amino-acid polypeptide reads, in one-letter code: Phosphatidylserine decarboxylase proenzyme (292 aa).

Catalysis depends on charge relay system; for autoendoproteolytic cleavage activity residues Asp-89, His-146, and Ser-252. Ser-252 functions as the Schiff-base intermediate with substrate; via pyruvic acid; for decarboxylase activity in the catalytic mechanism. Pyruvic acid (Ser); by autocatalysis is present on Ser-252.

It belongs to the phosphatidylserine decarboxylase family. PSD-B subfamily. Prokaryotic type I sub-subfamily. In terms of assembly, heterodimer of a large membrane-associated beta subunit and a small pyruvoyl-containing alpha subunit. Pyruvate serves as cofactor. Post-translationally, is synthesized initially as an inactive proenzyme. Formation of the active enzyme involves a self-maturation process in which the active site pyruvoyl group is generated from an internal serine residue via an autocatalytic post-translational modification. Two non-identical subunits are generated from the proenzyme in this reaction, and the pyruvate is formed at the N-terminus of the alpha chain, which is derived from the carboxyl end of the proenzyme. The autoendoproteolytic cleavage occurs by a canonical serine protease mechanism, in which the side chain hydroxyl group of the serine supplies its oxygen atom to form the C-terminus of the beta chain, while the remainder of the serine residue undergoes an oxidative deamination to produce ammonia and the pyruvoyl prosthetic group on the alpha chain. During this reaction, the Ser that is part of the protease active site of the proenzyme becomes the pyruvoyl prosthetic group, which constitutes an essential element of the active site of the mature decarboxylase.

The protein resides in the cell membrane. The enzyme catalyses a 1,2-diacyl-sn-glycero-3-phospho-L-serine + H(+) = a 1,2-diacyl-sn-glycero-3-phosphoethanolamine + CO2. It functions in the pathway phospholipid metabolism; phosphatidylethanolamine biosynthesis; phosphatidylethanolamine from CDP-diacylglycerol: step 2/2. In terms of biological role, catalyzes the formation of phosphatidylethanolamine (PtdEtn) from phosphatidylserine (PtdSer). The chain is Phosphatidylserine decarboxylase proenzyme from Shewanella sp. (strain MR-4).